The following is a 1305-amino-acid chain: Myosin-IIIb (1305 aa).

Residues 15-281 form the Protein kinase domain; sequence WEIIETIGKG…VTHLLDHPFI (267 aa). Residues 21 to 29 and Lys44 contribute to the ATP site; that span reads IGKGTYGKV. Asp144 acts as the Proton acceptor in catalysis. Residues 331–1046 enclose the Myosin motor domain; sequence CLEDDLVNLE…HVEQLNLLLR (716 aa). The segment at 927–949 is actin-binding; that stretch reads LMDLLSKMVVGQPHFIRCIKPND. 2 consecutive IQ domains span residues 1048-1077 and 1075-1104; these read VMGR…KREK and REKG…RRSE. Disordered regions lie at residues 1093–1164 and 1200–1233; these read RKLK…VTSG and SPCE…MLSS.

The protein in the C-terminal section; belongs to the TRAFAC class myosin-kinesin ATPase superfamily. Myosin family. It in the N-terminal section; belongs to the protein kinase superfamily. STE Ser/Thr protein kinase family. As to quaternary structure, interacts (via C-terminus) with ESPN. Interacts (via C-terminus) with ESPNL. Expressed in the cochlear hair cells (at protein level). Expressed in utricle hair bundles (at protein level).

It localises to the cytoplasm. The protein resides in the cytoskeleton. The protein localises to the cell projection. It is found in the stereocilium. It carries out the reaction L-seryl-[protein] + ATP = O-phospho-L-seryl-[protein] + ADP + H(+). It catalyses the reaction L-threonyl-[protein] + ATP = O-phospho-L-threonyl-[protein] + ADP + H(+). Probable actin-based motor with a protein kinase activity. Required for normal cochlear hair bundle development and hearing. Plays an important role in the early steps of cochlear hair bundle morphogenesis. Influences the number and lengths of stereocilia to be produced and limits the growth of microvilli within the forming auditory hair bundles thereby contributing to the architecture of the hair bundle, including its staircase pattern. Involved in the elongation of actin in stereocilia tips by transporting the actin regulatory factor ESPN to the plus ends of actin filaments. This Mus musculus (Mouse) protein is Myosin-IIIb (Myo3b).